Consider the following 349-residue polypeptide: Ion-translocating oxidoreductase complex subunit D (349 aa).

The next 3 membrane-spanning stretches (helical) occupy residues Cys36–Ser56, Ser77–Val99, and Ala124–Ala144. Position 185 is an FMN phosphoryl threonine (Thr185). A run of 5 helical transmembrane segments spans residues Ser212–Leu232, Trp239–Leu259, Ala265–Thr285, Ala291–Ile311, and Gly315–Ile335.

The protein belongs to the NqrB/RnfD family. As to quaternary structure, the complex is composed of six subunits: RnfA, RnfB, RnfC, RnfD, RnfE and RnfG. The cofactor is FMN.

The protein resides in the cell inner membrane. Functionally, part of a membrane-bound complex that couples electron transfer with translocation of ions across the membrane. This chain is Ion-translocating oxidoreductase complex subunit D, found in Shewanella oneidensis (strain ATCC 700550 / JCM 31522 / CIP 106686 / LMG 19005 / NCIMB 14063 / MR-1).